Consider the following 508-residue polypeptide: Flavonoid 3'-monooxygenase CYP75B137 (508 aa).

Residues 2–22 (LTFFFLWISTLLLSSFIVYLL) traverse the membrane as a helical segment. Heme is bound at residue cysteine 445.

The protein belongs to the cytochrome P450 family. The cofactor is heme. In terms of tissue distribution, expressed in young cromes.

The protein resides in the membrane. The enzyme catalyses a 3'-unsubstituted flavone + reduced [NADPH--hemoprotein reductase] + O2 = a 3'-hydroxyflavone + oxidized [NADPH--hemoprotein reductase] + H2O + H(+). It catalyses the reaction (2S)-naringenin + reduced [NADPH--hemoprotein reductase] + O2 = (S)-eriodictyol + oxidized [NADPH--hemoprotein reductase] + H2O + H(+). It carries out the reaction (2R,3R)-dihydrokaempferol + reduced [NADPH--hemoprotein reductase] + O2 = (2R,3R)-dihydroquercetin + oxidized [NADPH--hemoprotein reductase] + H2O + H(+). The catalysed reaction is kaempferol + reduced [NADPH--hemoprotein reductase] + O2 = quercetin + oxidized [NADPH--hemoprotein reductase] + H2O + H(+). It functions in the pathway flavonoid metabolism. Its function is as follows. Flavonoid 3'-hydroxylase that catalyzes the 3'-hydroxylation of flavanones, dihydroflavonols and flavonols. Converts narigenin to eriodictyol, dihydrokaempferol to dihydroquercetin and kaempferol to quercetin. In Crocosmia x crocosmiiflora (Montbretia), this protein is Flavonoid 3'-monooxygenase CYP75B137.